The following is a 201-amino-acid chain: UPF0301 protein RHE_CH00966 (201 aa).

This sequence belongs to the UPF0301 (AlgH) family.

The sequence is that of UPF0301 protein RHE_CH00966 from Rhizobium etli (strain ATCC 51251 / DSM 11541 / JCM 21823 / NBRC 15573 / CFN 42).